A 798-amino-acid chain; its full sequence is Phenylalanine--tRNA ligase beta subunit (798 aa).

Residues 39–148 (GKDLDNVVIG…EDAPIGTEYR (110 aa)) enclose the tRNA-binding domain. The B5 domain occupies 401-477 (PQRAEISLNL…RMYGFDNIEA (77 aa)). The Mg(2+) site is built by aspartate 455, aspartate 461, glutamate 464, and glutamate 465. In terms of domain architecture, FDX-ACB spans 705-797 (SKYPEVLRDL…IKDKYNGEIR (93 aa)).

The protein belongs to the phenylalanyl-tRNA synthetase beta subunit family. Type 1 subfamily. Tetramer of two alpha and two beta subunits. Mg(2+) is required as a cofactor.

Its subcellular location is the cytoplasm. It catalyses the reaction tRNA(Phe) + L-phenylalanine + ATP = L-phenylalanyl-tRNA(Phe) + AMP + diphosphate + H(+). In Fusobacterium nucleatum subsp. nucleatum (strain ATCC 25586 / DSM 15643 / BCRC 10681 / CIP 101130 / JCM 8532 / KCTC 2640 / LMG 13131 / VPI 4355), this protein is Phenylalanine--tRNA ligase beta subunit.